Here is a 56-residue protein sequence, read N- to C-terminus: Large ribosomal subunit protein bL33C (56 aa).

It belongs to the bacterial ribosomal protein bL33 family.

This Sorangium cellulosum (strain So ce56) (Polyangium cellulosum (strain So ce56)) protein is Large ribosomal subunit protein bL33C.